Consider the following 384-residue polypeptide: BTB and MATH domain-containing protein 34 (384 aa).

Residues 41–127 adopt a coiled-coil conformation; the sequence is LNGNTTLKRI…ELKFQKEQLK (87 aa). Positions 167-277 constitute an MATH domain; it reads EFSHTFNSVA…VFNFGEYEEI (111 aa). Residues 317 to 380 form the BTB domain; it reads SDAVMIVKDE…LYGEPALTGR (64 aa).

The chain is BTB and MATH domain-containing protein 34 (bath-34) from Caenorhabditis elegans.